Here is a 496-residue protein sequence, read N- to C-terminus: NADH-quinone oxidoreductase subunit N (496 aa).

Helical transmembrane passes span 16-36 (SLSP…VGAI), 46-66 (CVFC…FNGL), 79-99 (ISII…PLAL), 116-136 (FLFM…LIIF), 166-186 (FAMG…FYLA), 208-228 (LIIL…LSLI), 245-267 (LAGY…IFAM), 278-298 (DMLY…ALVQ), 304-324 (MLAF…VANS), 331-351 (LFFY…MLWV), 382-402 (AVIM…SVFW), 422-442 (IIMI…VFMF), and 464-484 (VIVG…GAIL).

The protein belongs to the complex I subunit 2 family. NDH-1 is composed of 14 different subunits. Subunits NuoA, H, J, K, L, M, N constitute the membrane sector of the complex.

It localises to the cell inner membrane. It carries out the reaction a quinone + NADH + 5 H(+)(in) = a quinol + NAD(+) + 4 H(+)(out). In terms of biological role, NDH-1 shuttles electrons from NADH, via FMN and iron-sulfur (Fe-S) centers, to quinones in the respiratory chain. The immediate electron acceptor for the enzyme in this species is believed to be ubiquinone. Couples the redox reaction to proton translocation (for every two electrons transferred, four hydrogen ions are translocated across the cytoplasmic membrane), and thus conserves the redox energy in a proton gradient. In Campylobacter concisus (strain 13826), this protein is NADH-quinone oxidoreductase subunit N.